The sequence spans 95 residues: Bacterial microcompartment shell protein EutM (95 aa).

One can recognise a BMC domain in the interval 6–90 (ALGMIETKGL…PHFEVDAILP (85 aa)).

The protein belongs to the bacterial microcompartments protein family. As to quaternary structure, homohexamer; has a positively charged pore 9 Angstroms in diameter. The hexamers pack into a two-dimensional array. May interact with EutQ.

The protein localises to the bacterial microcompartment. The protein operates within amine and polyamine degradation; ethanolamine degradation. In terms of biological role, a component of the bacterial microcompartment (BMC) shell dedicated to ethanolamine degradation. Each homohexamer has a central pore with an opening of up to 9.0 Angstroms. Expression of the eut operon may allow this bacteria to use ethanolamine as a carbon, nitrogen and energy source. The pore probably allows metabolite passage into and out of the BMC. The chain is Bacterial microcompartment shell protein EutM from Clostridioides difficile (strain 630) (Peptoclostridium difficile).